Here is a 66-residue protein sequence, read N- to C-terminus: Large ribosomal subunit protein bL35 (66 aa).

The tract at residues 1 to 26 (MPKQKTHRGAAKRFKKTGSGKLKRSH) is disordered.

This sequence belongs to the bacterial ribosomal protein bL35 family.

The polypeptide is Large ribosomal subunit protein bL35 (Bacillus anthracis).